We begin with the raw amino-acid sequence, 877 residues long: Dynamin (877 aa).

The region spanning 23 to 289 is the Dynamin-type G domain; it reads QLDLPQIAVV…LTNHIRDTLP (267 aa). The segment at 33-40 is G1 motif; it reads GGQSAGKS. 33–41 lines the GTP pocket; the sequence is GGQSAGKSS. Residues 59–61 form a G2 motif region; the sequence is VTR. Residues 131–134 are G3 motif; sequence DLPG. Positions 200–203 are G4 motif; that stretch reads TKLD. GTP contacts are provided by residues 200 to 206 and 231 to 234; these read TKLDLMD and NRSQ. Positions 230-233 are G5 motif; sequence VNRS. The PH domain occupies 513–621; that stretch reads QVIRKGHMVI…WKASFLRAGV (109 aa). Disordered stretches follow at residues 623 to 648 and 740 to 834; these read PEKQ…QLER and TVSS…SGAV. The span at 630–641 shows a compositional bias: acidic residues; it reads ENGDESASEESS. A GED domain is found at 650-741; it reads VETIRNLVDS…IIGDVSMATV (92 aa). Residues S756, S764, and S767 each carry the phosphoserine modification. The segment covering 788 to 826 has biased composition (pro residues); sequence PPLPPSTGRPAPAIPNRPGGGAPPLPGGRPGGSLPPPML.

It belongs to the TRAFAC class dynamin-like GTPase superfamily. Dynamin/Fzo/YdjA family.

It localises to the cytoplasm. Its subcellular location is the cytoskeleton. The enzyme catalyses GTP + H2O = GDP + phosphate + H(+). Its function is as follows. Microtubule-associated force-producing protein which is involved in the production of microtubule bundles and which is able to bind and hydrolyze GTP. Implicated in endocytic protein sorting. This Drosophila melanogaster (Fruit fly) protein is Dynamin (shi).